The following is an 819-amino-acid chain: LPS-assembly protein LptD (819 aa).

The N-terminal stretch at 1–33 (MRQMKYQFKFNPLAAAIFTLLCGGSMQSSYADA) is a signal peptide.

The protein belongs to the LptD family. Component of the lipopolysaccharide transport and assembly complex. Interacts with LptE and LptA.

It is found in the cell outer membrane. Its function is as follows. Together with LptE, is involved in the assembly of lipopolysaccharide (LPS) at the surface of the outer membrane. The protein is LPS-assembly protein LptD of Acinetobacter baylyi (strain ATCC 33305 / BD413 / ADP1).